The sequence spans 316 residues: 4-hydroxy-3-methylbut-2-enyl diphosphate reductase (316 aa).

Residue Cys12 coordinates [4Fe-4S] cluster. Residues His41 and His74 each coordinate (2E)-4-hydroxy-3-methylbut-2-enyl diphosphate. Positions 41 and 74 each coordinate dimethylallyl diphosphate. His41 and His74 together coordinate isopentenyl diphosphate. [4Fe-4S] cluster is bound at residue Cys96. His124 contacts (2E)-4-hydroxy-3-methylbut-2-enyl diphosphate. His124 provides a ligand contact to dimethylallyl diphosphate. His124 serves as a coordination point for isopentenyl diphosphate. Glu126 acts as the Proton donor in catalysis. Thr167 is a (2E)-4-hydroxy-3-methylbut-2-enyl diphosphate binding site. Cys197 provides a ligand contact to [4Fe-4S] cluster. (2E)-4-hydroxy-3-methylbut-2-enyl diphosphate contacts are provided by Ser225, Ser226, Asn227, and Ser269. Dimethylallyl diphosphate contacts are provided by Ser225, Ser226, Asn227, and Ser269. Isopentenyl diphosphate contacts are provided by Ser225, Ser226, Asn227, and Ser269.

It belongs to the IspH family. As to quaternary structure, homodimer. It depends on [4Fe-4S] cluster as a cofactor.

It carries out the reaction isopentenyl diphosphate + 2 oxidized [2Fe-2S]-[ferredoxin] + H2O = (2E)-4-hydroxy-3-methylbut-2-enyl diphosphate + 2 reduced [2Fe-2S]-[ferredoxin] + 2 H(+). It catalyses the reaction dimethylallyl diphosphate + 2 oxidized [2Fe-2S]-[ferredoxin] + H2O = (2E)-4-hydroxy-3-methylbut-2-enyl diphosphate + 2 reduced [2Fe-2S]-[ferredoxin] + 2 H(+). The protein operates within isoprenoid biosynthesis; dimethylallyl diphosphate biosynthesis; dimethylallyl diphosphate from (2E)-4-hydroxy-3-methylbutenyl diphosphate: step 1/1. It participates in isoprenoid biosynthesis; isopentenyl diphosphate biosynthesis via DXP pathway; isopentenyl diphosphate from 1-deoxy-D-xylulose 5-phosphate: step 6/6. In terms of biological role, catalyzes the conversion of 1-hydroxy-2-methyl-2-(E)-butenyl 4-diphosphate (HMBPP) into a mixture of isopentenyl diphosphate (IPP) and dimethylallyl diphosphate (DMAPP). Acts in the terminal step of the DOXP/MEP pathway for isoprenoid precursor biosynthesis. The polypeptide is 4-hydroxy-3-methylbut-2-enyl diphosphate reductase (Salmonella paratyphi C (strain RKS4594)).